The chain runs to 309 residues: Cell division protein FtsQ (309 aa).

The Cytoplasmic segment spans residues 1-52 (MLALRGRRGKRVRYPADGVAEADEAFVLPRPLRRGVRFLISLGAGRIRFPNH). Residues 53 to 74 (TGTVAAAAFMVATGLYGMSLGG) form a helical membrane-spanning segment. Topologically, residues 75-309 (HTQSFAQVST…KMLKAQEKRI (235 aa)) are periplasmic. One can recognise a POTRA domain in the interval 89-157 (FAIEDVRVSG…GTIEVVLKER (69 aa)).

This sequence belongs to the FtsQ/DivIB family. FtsQ subfamily.

It is found in the cell inner membrane. Essential cell division protein. The polypeptide is Cell division protein FtsQ (Rhizobium meliloti (strain 1021) (Ensifer meliloti)).